Here is a 57-residue protein sequence, read N- to C-terminus: Small ribosomal subunit protein bS21 (57 aa).

The tract at residues 35-57 is disordered; the sequence is RERYEKPSLRRKRKQEAARKRNR.

The protein belongs to the bacterial ribosomal protein bS21 family.

This is Small ribosomal subunit protein bS21 from Thermosynechococcus vestitus (strain NIES-2133 / IAM M-273 / BP-1).